We begin with the raw amino-acid sequence, 221 residues long: Phosphoglycolate phosphatase (221 aa).

Asp10 (nucleophile) is an active-site residue. Mg(2+) is bound by residues Asp10, Asp12, and Asp168.

This sequence belongs to the HAD-like hydrolase superfamily. CbbY/CbbZ/Gph/YieH family. Mg(2+) serves as cofactor.

It carries out the reaction 2-phosphoglycolate + H2O = glycolate + phosphate. Its pathway is organic acid metabolism; glycolate biosynthesis; glycolate from 2-phosphoglycolate: step 1/1. Specifically catalyzes the dephosphorylation of 2-phosphoglycolate. Is involved in the dissimilation of the intracellular 2-phosphoglycolate formed during the DNA repair of 3'-phosphoglycolate ends, a major class of DNA lesions induced by oxidative stress. The sequence is that of Phosphoglycolate phosphatase from Xanthomonas campestris pv. campestris (strain 8004).